A 165-amino-acid chain; its full sequence is UPF0178 protein Bphyt_5655 (165 aa).

Disordered regions lie at residues 115–134 (LRGSGVDTGGPSAFSQRDSK) and 139–165 (ELDRWLSRQRPQPDASAPQSADEPPTE).

This sequence belongs to the UPF0178 family.

The sequence is that of UPF0178 protein Bphyt_5655 from Paraburkholderia phytofirmans (strain DSM 17436 / LMG 22146 / PsJN) (Burkholderia phytofirmans).